Reading from the N-terminus, the 135-residue chain is Small ribosomal subunit protein uS11 (135 aa).

The span at 1–10 (MPPKSRTATA) shows a compositional bias: polar residues. Disordered stretches follow at residues 1 to 27 (MPPK…HGHA) and 114 to 135 (GAIQ…RRRV). Residues 12–27 (RKPRRKEKKNVAHGHA) are compositionally biased toward basic residues.

Belongs to the universal ribosomal protein uS11 family. In terms of assembly, part of the 30S ribosomal subunit. Interacts with proteins S7 and S18. Binds to IF-3.

In terms of biological role, located on the platform of the 30S subunit, it bridges several disparate RNA helices of the 16S rRNA. Forms part of the Shine-Dalgarno cleft in the 70S ribosome. This is Small ribosomal subunit protein uS11 from Kineococcus radiotolerans (strain ATCC BAA-149 / DSM 14245 / SRS30216).